The following is a 192-amino-acid chain: ATP-dependent Clp protease proteolytic subunit 1 (192 aa).

Ser-92 serves as the catalytic Nucleophile. His-117 is an active-site residue.

This sequence belongs to the peptidase S14 family. In terms of assembly, fourteen ClpP subunits assemble into 2 heptameric rings which stack back to back to give a disk-like structure with a central cavity, resembling the structure of eukaryotic proteasomes.

Its subcellular location is the cytoplasm. The catalysed reaction is Hydrolysis of proteins to small peptides in the presence of ATP and magnesium. alpha-casein is the usual test substrate. In the absence of ATP, only oligopeptides shorter than five residues are hydrolyzed (such as succinyl-Leu-Tyr-|-NHMec, and Leu-Tyr-Leu-|-Tyr-Trp, in which cleavage of the -Tyr-|-Leu- and -Tyr-|-Trp bonds also occurs).. Functionally, cleaves peptides in various proteins in a process that requires ATP hydrolysis. Has a chymotrypsin-like activity. Plays a major role in the degradation of misfolded proteins. The sequence is that of ATP-dependent Clp protease proteolytic subunit 1 from Chlamydia trachomatis serovar D (strain ATCC VR-885 / DSM 19411 / UW-3/Cx).